The sequence spans 409 residues: Terpredoxin reductase (409 aa).

7–38 (TTVIVGAGHAGTAAAFFLREFGYHGRVLLLSA) is an FAD binding site. Residue 151–159 (GGGFIGLEI) coordinates NAD(+).

Requires FAD as cofactor.

Its function is as follows. The oxidation of alpha-terpineol by cytochrome p450-TERP requires the participation of a flavoprotein, terpredoxin reductase, and an iron-sulfur protein, terpredoxin, to mediate the transfer of electrons from NADH to P450 for oxygen activation. The protein is Terpredoxin reductase (terPA) of Pseudomonas sp.